The sequence spans 161 residues: Allophycocyanin alpha chain 2 (161 aa).

Asparagine 71 carries the N4-methylasparagine modification. A (2R,3E)-phycocyanobilin-binding site is contributed by cysteine 81.

The protein belongs to the phycobiliprotein family. As to quaternary structure, component of the phycobilisome. Heterodimer of an alpha and a beta chain. In terms of processing, contains one covalently linked bilin chromophore.

The protein resides in the cellular thylakoid membrane. Functionally, light-harvesting photosynthetic bile pigment-protein from the phycobiliprotein complex. Allophycocyanin has a maximum absorption at approximately 650 nanometers. This chain is Allophycocyanin alpha chain 2 (apcA2), found in Microchaete diplosiphon (Fremyella diplosiphon).